The primary structure comprises 241 residues: uncharacterized protein (241 aa).

In terms of domain architecture, GGDEF spans 84–216 (TVVSLVVCDL…APGPVVAGRD (133 aa)). Residues 215–241 (RDGEVVRLADSPPKSAHDRRRLRGNRP) form a disordered region. A compositionally biased stretch (basic residues) spans 231-241 (HDRRRLRGNRP).

This is an uncharacterized protein from Streptomyces griseus.